The sequence spans 1579 residues: MLVKVPILGRETIHVGYGVRSHIVETIVGLKSSTYVVINDSNVGRVPYFQELLSDFEAQLPAGSRLLRYVVKPGEANKTRATKEQIEDYLLSEGCTRDTVIVAVGGGIIGDMIGYVAATFMRGVRVVQVPTSLLAMVDSSIGGKTAVDTPLGKNFIGAFWQPEFVLVDIKWLQSLPKREFINGMAEVIKTACIWNADEFQRLETHADEFLHVVNTPKISEKEGFQLYDTDIESIKEHIFKLVLESIKVKAEVVSSDERESSLRNLLNFGHSIGHAYEAILTPQALHGECVSIGMVKEAELSRYLGILSATQVARLSKILVAYGLPVSKDEKWFRELTLNKKTPLDTLLKKMSIDKKNDGSKKKVVLLETIGKCYGKSAHVVSDEDLRFVLTDETLVYPFNNIPRDQNKTVTPPGSKSISNRALVLAALGKGTCRIKNLLHSDDTKHMLTAVQELKGANISWEDNGETVVLEGQGGSTLVACENDLYLGNAGTASRFLTSVAALVNSTSQKDHVILTGNARMQQRPIGPLVDSLRNNGIKIDYVKNEGCLPLKVHTDSVFKGGRIELAATVSSQYVSSILMCAPYAENPVTLALVGGKPISILYVEMTIKMMEKFGIKVEKSTTEEYTYIIPKGHYVNPAEYVIESDASSATYPLAFAALTGTTVTVPNIGSASLQGDARFATDVLQPMGCSVTQTATSTTVTGPPVGHLKPLKHVDMEPMTDAFLTACVVAAVAHDNDPTSKNTTTIEGIANQRVKECNRIEAMCTQLAKFGVRTNELPDGIQVHGLHSINDLKVPSIGNEAVGVCTYDDHRVAMSFSLLAGMVNSEQPNSSNPTPVRILERHCTGKTWPGWWDVLHTELGAQLDGAEPLELNSMKNAKKSVVIIGMRAAGKTTISRWCAAALGYKLVDLDTLFEERYGHGMIKDFVSQHGWEKFREEEARIFKEVIENYGDAGYVFSSGGGLVESSESRRILKSFSKSGGYVLHLHRDIEETIMFLQKDPTRPAYVEEIREVWNRRESWYKDCSNFSFFAPHCNSEVEFQNLRRAFTKFIRTITGVTTVDIPTRRSAFVCLTFENLTEYTNSLKAITYGCDAVEVRVDHLSNMDEDFVSKQISILRASTDGLPIIFTVRTKKQGGKFPDEDYETLQKLLITALKVGVDYIDLELTLPIGIQYKVLNMKRNTKIIGSHHDFASAYPWDHSEWENRYNQALAMDVDIVKFVGMAKSFEDNLMLERFRDSHTTKPLIAINMGAHGRVSRVLNTILTPVTSEHLSEVAAPGQLTVAEINRIYTEMGGITKKDFFVVGSPIGHSRSPVLHNTGYSVLGLPHHFDKFETTSAEEVKKHLLDNKANLGGLAVTIPLKLDIIKYMDELTESAKVIGAVNTVIPLGNSKFKGDNTDWLGIRNSLVSNGVPESVSGLSGLVVGAGGTSRAAIFALHKLGCQKIFIVNRTTEKLEELVKFFPEEYNIVPIKEAEEAEAVNETIGVAVNCVPADKPLDAKLESLLERLLLKSSHTHFVSTLVEAAYKPSVTPVMKLAKDKYQWRVVPGAQMLVHQGVAQFETWNNCRAPFKAIYDAVTEI.

The segment at 1 to 383 is 3-dehydroquinate synthase; sequence MLVKVPILGR…YGKSAHVVSD (383 aa). NAD(+) is bound by residues 40–42, 75–78, 106–108, and D111; these read DSN, EANK, and GGI. Residue R122 participates in 7-phospho-2-dehydro-3-deoxy-D-arabino-heptonate binding. 131 to 132 is a binding site for NAD(+); the sequence is TS. D138 and K144 together coordinate 7-phospho-2-dehydro-3-deoxy-D-arabino-heptonate. An NAD(+)-binding site is contributed by K153. N154 serves as a coordination point for 7-phospho-2-dehydro-3-deoxy-D-arabino-heptonate. Residues 171 to 174 and N182 each bind NAD(+); that span reads WLQS. Position 186 (E186) interacts with Zn(2+). Residues 186–189 and K249 contribute to the 7-phospho-2-dehydro-3-deoxy-D-arabino-heptonate site; that span reads EVIK. E259 (proton acceptor; for 3-dehydroquinate synthase activity) is an active-site residue. 7-phospho-2-dehydro-3-deoxy-D-arabino-heptonate is bound by residues 263-267 and H270; that span reads RNLLN. H270 is a binding site for Zn(2+). Residue H274 is the Proton acceptor; for 3-dehydroquinate synthase activity of the active site. The 7-phospho-2-dehydro-3-deoxy-D-arabino-heptonate site is built by H286 and K355. H286 contributes to the Zn(2+) binding site. The segment at 396–862 is EPSP synthase; it reads VYPFNNIPRD…WDVLHTELGA (467 aa). The For EPSP synthase activity role is filled by C844. Positions 881–1071 are shikimate kinase; sequence SVVIIGMRAA…IPTRRSAFVC (191 aa). 886–893 is a binding site for ATP; sequence GMRAAGKT. The interval 1072 to 1284 is 3-dehydroquinase; that stretch reads LTFENLTEYT…AAPGQLTVAE (213 aa). The active-site Proton acceptor; for 3-dehydroquinate dehydratase activity is H1189. The active-site Schiff-base intermediate with substrate; for 3-dehydroquinate dehydratase activity is K1218. The segment at 1297–1579 is shikimate dehydrogenase; that stretch reads KKDFFVVGSP…KAIYDAVTEI (283 aa).

The protein in the N-terminal section; belongs to the sugar phosphate cyclases superfamily. Dehydroquinate synthase family. This sequence in the 2nd section; belongs to the EPSP synthase family. In the 3rd section; belongs to the shikimate kinase family. It in the 4th section; belongs to the type-I 3-dehydroquinase family. The protein in the C-terminal section; belongs to the shikimate dehydrogenase family. Homodimer. Zn(2+) is required as a cofactor.

Its subcellular location is the cytoplasm. The catalysed reaction is 7-phospho-2-dehydro-3-deoxy-D-arabino-heptonate = 3-dehydroquinate + phosphate. It catalyses the reaction 3-dehydroquinate = 3-dehydroshikimate + H2O. The enzyme catalyses shikimate + NADP(+) = 3-dehydroshikimate + NADPH + H(+). It carries out the reaction shikimate + ATP = 3-phosphoshikimate + ADP + H(+). The catalysed reaction is 3-phosphoshikimate + phosphoenolpyruvate = 5-O-(1-carboxyvinyl)-3-phosphoshikimate + phosphate. It functions in the pathway metabolic intermediate biosynthesis; chorismate biosynthesis; chorismate from D-erythrose 4-phosphate and phosphoenolpyruvate: step 2/7. The protein operates within metabolic intermediate biosynthesis; chorismate biosynthesis; chorismate from D-erythrose 4-phosphate and phosphoenolpyruvate: step 3/7. It participates in metabolic intermediate biosynthesis; chorismate biosynthesis; chorismate from D-erythrose 4-phosphate and phosphoenolpyruvate: step 4/7. Its pathway is metabolic intermediate biosynthesis; chorismate biosynthesis; chorismate from D-erythrose 4-phosphate and phosphoenolpyruvate: step 5/7. It functions in the pathway metabolic intermediate biosynthesis; chorismate biosynthesis; chorismate from D-erythrose 4-phosphate and phosphoenolpyruvate: step 6/7. The AROM polypeptide catalyzes 5 consecutive enzymatic reactions in prechorismate polyaromatic amino acid biosynthesis. In Candida glabrata (strain ATCC 2001 / BCRC 20586 / JCM 3761 / NBRC 0622 / NRRL Y-65 / CBS 138) (Yeast), this protein is Pentafunctional AROM polypeptide.